A 627-amino-acid polypeptide reads, in one-letter code: Plasmepsin IX (627 aa).

Residues 1–13 (MFFINFKKIKKKQ) lie on the Cytoplasmic side of the membrane. The helical; Signal-anchor for type II membrane protein transmembrane segment at 14–34 (FPIYLTQHRIITVFLIFIYFI) threads the bilayer. The Lumenal portion of the chain corresponds to 35–627 (NLKDCFHINN…SSLHNKINNL (593 aa)). One can recognise a Peptidase A1 domain in the interval 228–605 (YVGYIQIGTP…NNNSSYVGIA (378 aa)). Residues aspartate 246 and aspartate 495 contribute to the active site.

The protein belongs to the peptidase A1 family. In terms of processing, autocleaved into a p55 mature form.

It is found in the membrane. It localises to the cytoplasmic vesicle. Its subcellular location is the secretory vesicle. The protein localises to the rhoptry. Its activity is regulated as follows. Inhibited by small molecule 49c. Inhibited by small molecule WM382. Its function is as follows. During the asexual blood stage, initiates the proteolytic maturation of several rhoptry proteins and thus, is required for merozoite invasion of host erythrocytes and probably the subsequent development of the ring-stage. Cleaves rhoptry associated protein 1 RAP1 and apical sushi protein ASP during schizont maturation. Also cleaves rhoptry protein RON3. The protein is Plasmepsin IX of Plasmodium falciparum (isolate 3D7).